The chain runs to 36 residues: Dermonecrotic toxin LgSicTox-beta-LOXN1/LOXN7 (36 aa).

Belongs to the arthropod phospholipase D family. Class II subfamily. The cofactor is Mg(2+). In terms of processing, contains 2 disulfide bonds. Expressed by the venom gland.

It localises to the secreted. The catalysed reaction is an N-(acyl)-sphingosylphosphocholine = an N-(acyl)-sphingosyl-1,3-cyclic phosphate + choline. It catalyses the reaction an N-(acyl)-sphingosylphosphoethanolamine = an N-(acyl)-sphingosyl-1,3-cyclic phosphate + ethanolamine. It carries out the reaction a 1-acyl-sn-glycero-3-phosphocholine = a 1-acyl-sn-glycero-2,3-cyclic phosphate + choline. The enzyme catalyses a 1-acyl-sn-glycero-3-phosphoethanolamine = a 1-acyl-sn-glycero-2,3-cyclic phosphate + ethanolamine. In terms of biological role, dermonecrotic toxins cleave the phosphodiester linkage between the phosphate and headgroup of certain phospholipids (sphingolipid and lysolipid substrates), forming an alcohol (often choline) and a cyclic phosphate. This toxin acts on sphingomyelin (SM). It may also act on ceramide phosphoethanolamine (CPE), lysophosphatidylcholine (LPC) and lysophosphatidylethanolamine (LPE), but not on lysophosphatidylserine (LPS), and lysophosphatidylglycerol (LPG). It acts by transphosphatidylation, releasing exclusively cyclic phosphate products as second products. Induces dermonecrosis, hemolysis, increased vascular permeability, edema, inflammatory response, and platelet aggregation. This Loxosceles gaucho (Spider) protein is Dermonecrotic toxin LgSicTox-beta-LOXN1/LOXN7.